A 362-amino-acid chain; its full sequence is UDP-N-acetylglucosamine--N-acetylmuramyl-(pentapeptide) pyrophosphoryl-undecaprenol N-acetylglucosamine transferase (362 aa).

UDP-N-acetyl-alpha-D-glucosamine is bound by residues 21 to 23 (TGG), Asn129, Arg170, Ser198, and Gln290.

It belongs to the glycosyltransferase 28 family. MurG subfamily.

Its subcellular location is the cell inner membrane. The enzyme catalyses di-trans,octa-cis-undecaprenyl diphospho-N-acetyl-alpha-D-muramoyl-L-alanyl-D-glutamyl-meso-2,6-diaminopimeloyl-D-alanyl-D-alanine + UDP-N-acetyl-alpha-D-glucosamine = di-trans,octa-cis-undecaprenyl diphospho-[N-acetyl-alpha-D-glucosaminyl-(1-&gt;4)]-N-acetyl-alpha-D-muramoyl-L-alanyl-D-glutamyl-meso-2,6-diaminopimeloyl-D-alanyl-D-alanine + UDP + H(+). It participates in cell wall biogenesis; peptidoglycan biosynthesis. In terms of biological role, cell wall formation. Catalyzes the transfer of a GlcNAc subunit on undecaprenyl-pyrophosphoryl-MurNAc-pentapeptide (lipid intermediate I) to form undecaprenyl-pyrophosphoryl-MurNAc-(pentapeptide)GlcNAc (lipid intermediate II). The sequence is that of UDP-N-acetylglucosamine--N-acetylmuramyl-(pentapeptide) pyrophosphoryl-undecaprenol N-acetylglucosamine transferase from Synechococcus sp. (strain JA-3-3Ab) (Cyanobacteria bacterium Yellowstone A-Prime).